A 187-amino-acid chain; its full sequence is ATP synthase subunit b (187 aa).

Residues 31–51 (VAIMGLAIFVLFLILSYLLFN) form a helical membrane-spanning segment.

The protein belongs to the ATPase B chain family. F-type ATPases have 2 components, F(1) - the catalytic core - and F(0) - the membrane proton channel. F(1) has five subunits: alpha(3), beta(3), gamma(1), delta(1), epsilon(1). F(0) has three main subunits: a(1), b(2) and c(10-14). The alpha and beta chains form an alternating ring which encloses part of the gamma chain. F(1) is attached to F(0) by a central stalk formed by the gamma and epsilon chains, while a peripheral stalk is formed by the delta and b chains.

Its subcellular location is the cell membrane. F(1)F(0) ATP synthase produces ATP from ADP in the presence of a proton or sodium gradient. F-type ATPases consist of two structural domains, F(1) containing the extramembraneous catalytic core and F(0) containing the membrane proton channel, linked together by a central stalk and a peripheral stalk. During catalysis, ATP synthesis in the catalytic domain of F(1) is coupled via a rotary mechanism of the central stalk subunits to proton translocation. Functionally, component of the F(0) channel, it forms part of the peripheral stalk, linking F(1) to F(0). The polypeptide is ATP synthase subunit b (Lachnoclostridium phytofermentans (strain ATCC 700394 / DSM 18823 / ISDg) (Clostridium phytofermentans)).